The primary structure comprises 466 residues: Alpha-1A adrenergic receptor (466 aa).

Residues 1–27 (MVLLSENASEGSNCTHPPAPVNISKAI) lie on the Extracellular side of the membrane. Asn-7, Asn-13, and Asn-22 each carry an N-linked (GlcNAc...) asparagine glycan. Residues 28-51 (LLGVILGGLIIFGVLGNILVILSV) traverse the membrane as a helical segment. Topologically, residues 52–64 (ACHRHLHSVTHYY) are cytoplasmic. Residues 65–88 (IVNLAVADLLLTSTVLPFSAIFEI) traverse the membrane as a helical segment. Residues 89–99 (LGYWAFGRVFC) lie on the Extracellular side of the membrane. Cys-99 and Cys-176 are joined by a disulfide. A helical transmembrane segment spans residues 100–122 (NIWAAVDVLCCTASIMGLCIISI). Residues 123–143 (DRYIGVSYPLRYPTIVTQRRG) are Cytoplasmic-facing. The helical transmembrane segment at 144-167 (VRALLCVWVLSLVISIGPLFGWRQ) threads the bilayer. Topologically, residues 168 to 181 (PAPEDETICQINEE) are extracellular. The chain crosses the membrane as a helical span at residues 182–205 (PGYVLFSALGSFYVPLAIILVMYC). Residues 206-273 (RVYVVAKRES…FSREKKAAKT (68 aa)) lie on the Cytoplasmic side of the membrane. Ser-215 is modified (phosphoserine; by PKA). Residues 274–297 (LGIVVGCFVLCWLPFFLVMPIGSF) traverse the membrane as a helical segment. Over 298-305 (FPDFKPSE) the chain is Extracellular. Residues 306 to 329 (TVFKIVFWLGYLNSCINPIIYPCS) traverse the membrane as a helical segment. Residues 330-466 (SQEFKKAFQN…ISLGENGEEV (137 aa)) are Cytoplasmic-facing. A Nuclear localization signal motif is present at residues 334 to 349 (KKAFQNVLRIQCLRRR). The S-palmitoyl cysteine moiety is linked to residue Cys-345.

Belongs to the G-protein coupled receptor 1 family. Adrenergic receptor subfamily. ADRA1A sub-subfamily. Homo- and heterooligomer. Heterooligomerizes with ADRA1B homooligomers in cardiac myocytes. Interacts with CAVIN4. C-terminal Ser or Thr residues may be phosphorylated. In terms of tissue distribution, abundant in heart, brain, aorta, vena cava, vas deferens, submaxillary gland, lung, and kidney. Found at lower levels in prostate, parotid gland and skeletal muscle.

It localises to the nucleus membrane. Its subcellular location is the cell membrane. The protein localises to the cytoplasm. It is found in the membrane. The protein resides in the caveola. This alpha-adrenergic receptor mediates its action by association with G proteins that activate a phosphatidylinositol-calcium second messenger system. Its effect is mediated by G(q) and G(11) proteins. Nuclear ADRA1A-ADRA1B heterooligomers regulate phenylephrine (PE)-stimulated ERK signaling in cardiac myocytes. The polypeptide is Alpha-1A adrenergic receptor (Adra1a) (Rattus norvegicus (Rat)).